Reading from the N-terminus, the 327-residue chain is Interleukin-12 subunit beta (327 aa).

An N-terminal signal peptide occupies residues 1–22; sequence MHPQQLVVSWFSLVLLASPIVA. The Ig-like C2-type domain occupies 23–106; sequence IWELEKNVYI…LSRSLLLLHK (84 aa). C50 and C90 are oxidised to a cystine. A glycan (N-linked (GlcNAc...) asparagine) is linked at N223. Residues 238–327 enclose the Fibronectin type-III domain; it reads PPKNLQLKPL…WSEWASVSCS (90 aa).

This sequence belongs to the IL-12B family. Heterodimer with IL12A; disulfide-linked. The heterodimer is known as interleukin IL-12. Heterodimer with IL23A; disulfide-linked. The heterodimer is known as interleukin IL-23. Also secreted as a monomer. Interacts with NBR1; this interaction promotes IL-12 secretion.

Its function is as follows. Cytokine that can act as a growth factor for activated T and NK cells, enhance the lytic activity of NK/lymphokine-activated killer cells, and stimulate the production of IFN-gamma by resting PBMC. In terms of biological role, associates with IL23A to form the IL-23 interleukin, a heterodimeric cytokine which functions in innate and adaptive immunity. IL-23 may constitute with IL-17 an acute response to infection in peripheral tissues. IL-23 binds to a heterodimeric receptor complex composed of IL12RB1 and IL23R, activates the Jak-Stat signaling cascade, stimulates memory rather than naive T-cells and promotes production of pro-inflammatory cytokines. IL-23 induces autoimmune inflammation and thus may be responsible for autoimmune inflammatory diseases and may be important for tumorigenesis. This chain is Interleukin-12 subunit beta (IL12B), found in Bubalus bubalis (Domestic water buffalo).